The primary structure comprises 347 residues: MEKINEYGSERIVSPERTGYDSYSLRPKFLSEYIGQENIKERLKLAIQASKMRGEQLDHILLAGPPGLGKTTLATIIANELNANIHVTSGPILEKQGDLAAILTNLEAGDVLFIDEIHRMNRNVEEILYSAMEDFQVDIMIGKGPAARSIRVELQPFTLIGATTRSGLLTSPLRNRFGMIFEMNFYTQEELKMIITRAAEVMGTLIDDDAALSIAKRSRGTPRIAIRLLKRVRDLSTVRGSENITLNIVEEVMRLLGVDEFGLDEMDRKILKTIIEIYKGGPVGLKSLAASLGITEDTISEVYEPFLVQSGFIARGARGRIATEKAYKYLGYNTLPGGLFDGFGNIE.

The segment at 4-186 is large ATPase domain (RuvB-L); that stretch reads INEYGSERIV…FGMIFEMNFY (183 aa). ATP contacts are provided by residues Leu25, Arg26, Gly67, Lys70, Thr71, Thr72, 133-135, Arg176, Tyr186, and Arg223; that span reads EDF. Mg(2+) is bound at residue Thr71. The interval 187-257 is small ATPAse domain (RuvB-S); the sequence is TQEELKMIIT…IVEEVMRLLG (71 aa). Residues 260 to 347 are head domain (RuvB-H); sequence EFGLDEMDRK…GLFDGFGNIE (88 aa). Residues Arg315 and Arg320 each contribute to the DNA site.

It belongs to the RuvB family. In terms of assembly, homohexamer. Forms an RuvA(8)-RuvB(12)-Holliday junction (HJ) complex. HJ DNA is sandwiched between 2 RuvA tetramers; dsDNA enters through RuvA and exits via RuvB. An RuvB hexamer assembles on each DNA strand where it exits the tetramer. Each RuvB hexamer is contacted by two RuvA subunits (via domain III) on 2 adjacent RuvB subunits; this complex drives branch migration. In the full resolvosome a probable DNA-RuvA(4)-RuvB(12)-RuvC(2) complex forms which resolves the HJ.

It is found in the cytoplasm. The catalysed reaction is ATP + H2O = ADP + phosphate + H(+). The RuvA-RuvB-RuvC complex processes Holliday junction (HJ) DNA during genetic recombination and DNA repair, while the RuvA-RuvB complex plays an important role in the rescue of blocked DNA replication forks via replication fork reversal (RFR). RuvA specifically binds to HJ cruciform DNA, conferring on it an open structure. The RuvB hexamer acts as an ATP-dependent pump, pulling dsDNA into and through the RuvAB complex. RuvB forms 2 homohexamers on either side of HJ DNA bound by 1 or 2 RuvA tetramers; 4 subunits per hexamer contact DNA at a time. Coordinated motions by a converter formed by DNA-disengaged RuvB subunits stimulates ATP hydrolysis and nucleotide exchange. Immobilization of the converter enables RuvB to convert the ATP-contained energy into a lever motion, pulling 2 nucleotides of DNA out of the RuvA tetramer per ATP hydrolyzed, thus driving DNA branch migration. The RuvB motors rotate together with the DNA substrate, which together with the progressing nucleotide cycle form the mechanistic basis for DNA recombination by continuous HJ branch migration. Branch migration allows RuvC to scan DNA until it finds its consensus sequence, where it cleaves and resolves cruciform DNA. The chain is Holliday junction branch migration complex subunit RuvB from Fervidobacterium nodosum (strain ATCC 35602 / DSM 5306 / Rt17-B1).